The sequence spans 231 residues: Probable caffeoyl-CoA O-methyltransferase 2 (231 aa).

S-adenosyl-L-methionine contacts are provided by residues T53, D75, 77–78 (GV), S83, D101, A130, D152, D154, and Y161. Residue D152 coordinates a divalent metal cation. Residues D178 and N179 each contribute to the a divalent metal cation site.

The protein belongs to the class I-like SAM-binding methyltransferase superfamily. Cation-dependent O-methyltransferase family. CCoAMT subfamily.

The enzyme catalyses (E)-caffeoyl-CoA + S-adenosyl-L-methionine = (E)-feruloyl-CoA + S-adenosyl-L-homocysteine + H(+). The chain is Probable caffeoyl-CoA O-methyltransferase 2 (omt6) from Dictyostelium discoideum (Social amoeba).